A 256-amino-acid chain; its full sequence is Isoprenyl transferase (256 aa).

The tract at residues 1–22 (MLEKFSKWKGNRSNHTTPSHSL) is disordered. The active site involves D36. D36 is a binding site for Mg(2+). Substrate contacts are provided by residues 37–40 (GNGR), W41, R49, H53, and 81–83 (STE). Residue N84 is the Proton acceptor of the active site. Substrate-binding positions include W85, R87, R204, and 210-212 (RLS). Residue E223 participates in Mg(2+) binding.

Belongs to the UPP synthase family. As to quaternary structure, homodimer. The cofactor is Mg(2+).

Its function is as follows. Catalyzes the condensation of isopentenyl diphosphate (IPP) with allylic pyrophosphates generating different type of terpenoids. The protein is Isoprenyl transferase of Halalkalibacterium halodurans (strain ATCC BAA-125 / DSM 18197 / FERM 7344 / JCM 9153 / C-125) (Bacillus halodurans).